Reading from the N-terminus, the 334-residue chain is Protein-methionine-sulfoxide reductase catalytic subunit MsrP (334 aa).

The segment at residues 1–44 (MKKNQFLKESDVTAESVFFMKRRQVLKALGISAAALSLPHAAHA) is a signal peptide (tat-type signal). Residues Asn-88, 91 to 92 (YE), Cys-146, Thr-181, Asn-233, Arg-238, and 249 to 251 (GIK) each bind Mo-molybdopterin.

The protein belongs to the MsrP family. In terms of assembly, heterodimer of a catalytic subunit (MsrP) and a heme-binding subunit (MsrQ). Mo-molybdopterin is required as a cofactor. Post-translationally, predicted to be exported by the Tat system. The position of the signal peptide cleavage has not been experimentally proven.

Its subcellular location is the periplasm. It catalyses the reaction L-methionyl-[protein] + a quinone + H2O = L-methionyl-(S)-S-oxide-[protein] + a quinol. The catalysed reaction is L-methionyl-[protein] + a quinone + H2O = L-methionyl-(R)-S-oxide-[protein] + a quinol. In terms of biological role, part of the MsrPQ system that repairs oxidized periplasmic proteins containing methionine sulfoxide residues (Met-O), using respiratory chain electrons. Thus protects these proteins from oxidative-stress damage caused by reactive species of oxygen and chlorine generated by the host defense mechanisms. MsrPQ is essential for the maintenance of envelope integrity under bleach stress, rescuing a wide series of structurally unrelated periplasmic proteins from methionine oxidation, including the primary periplasmic chaperone SurA and the lipoprotein Pal. The catalytic subunit MsrP is non-stereospecific, being able to reduce both (R-) and (S-) diastereoisomers of methionine sulfoxide. The polypeptide is Protein-methionine-sulfoxide reductase catalytic subunit MsrP (Escherichia coli O157:H7).